Here is a 268-residue protein sequence, read N- to C-terminus: Adenosylcobinamide-GDP ribazoletransferase (268 aa).

Helical transmembrane passes span 1–21 (MAGN…TLPV), 36–56 (YLFI…GTLF), 59–79 (ILPA…LTGI), 112–132 (AGGL…AMTF), 138–158 (WLFV…ITII), 182–202 (LAAV…AAII), 212–232 (IMAG…ILII), and 244–264 (VIGA…GAVL).

It belongs to the CobS family. It depends on Mg(2+) as a cofactor.

It is found in the cell membrane. The catalysed reaction is alpha-ribazole + adenosylcob(III)inamide-GDP = adenosylcob(III)alamin + GMP + H(+). The enzyme catalyses alpha-ribazole 5'-phosphate + adenosylcob(III)inamide-GDP = adenosylcob(III)alamin 5'-phosphate + GMP + H(+). It participates in cofactor biosynthesis; adenosylcobalamin biosynthesis; adenosylcobalamin from cob(II)yrinate a,c-diamide: step 7/7. Functionally, joins adenosylcobinamide-GDP and alpha-ribazole to generate adenosylcobalamin (Ado-cobalamin). Also synthesizes adenosylcobalamin 5'-phosphate from adenosylcobinamide-GDP and alpha-ribazole 5'-phosphate. The protein is Adenosylcobinamide-GDP ribazoletransferase of Methanocella arvoryzae (strain DSM 22066 / NBRC 105507 / MRE50).